Consider the following 531-residue polypeptide: uncharacterized protein (531 aa).

Residues 1–28 form the signal peptide; the sequence is MNTKGIIAKLTAGALIANLLICPANTLA. SLH domains lie at 29-85, 86-149, and 150-210; these read EKKT…QINK, QAKP…IGDL, and PTQF…SKRM. In terms of domain architecture, MurNAc-LAA spans 335-517; sequence IIIDPGHGGI…AAEAIYAGIL (183 aa).

This sequence in the C-terminal section; belongs to the N-acetylmuramoyl-L-alanine amidase 3 family.

The protein resides in the secreted. Its subcellular location is the cell wall. The protein localises to the S-layer. This is an uncharacterized protein from Bacillus anthracis.